A 292-amino-acid chain; its full sequence is Malectin (292 aa).

Residues 1-28 form the signal peptide; that stretch reads MLGAWAVEGTAVALLRLLLLLLPPAIRG. The Lumenal segment spans residues 29-269; sequence PGLGVAGVAG…TPNPYASDNS (241 aa). Positions 82, 104, 131, 132, and 201 each coordinate a carbohydrate. Residues 221 to 265 are disordered; it reads LQPHPGLEKKEEEEEEEEYDEGSNLKKQTNKNRVQSGPRTPNPYA. The span at 231–241 shows a compositional bias: acidic residues; the sequence is EEEEEEEEYDE. Polar residues predominate over residues 245-265; it reads LKKQTNKNRVQSGPRTPNPYA. N-linked (GlcNAc...) asparagine glycosylation is present at Asn-268. Residues 270–290 form a helical membrane-spanning segment; it reads SLMFPILVAFGVFIPTLFCLC. The Cytoplasmic portion of the chain corresponds to 291 to 292; sequence RL.

This sequence belongs to the malectin family. As to quaternary structure, interacts with the oligosaccharyltransferase (OST) complex.

It is found in the endoplasmic reticulum membrane. Its function is as follows. Carbohydrate-binding protein with a strong ligand preference for Glc2-N-glycan. May play a role in the early steps of protein N-glycosylation. The polypeptide is Malectin (Homo sapiens (Human)).